Consider the following 38-residue polypeptide: RCSPCFTTDQQMTKKCYDCCGGKGKGKCYGPQCICAPY.

Intrachain disulfides connect Cys2/Cys19, Cys5/Cys28, Cys16/Cys33, and Cys20/Cys35.

As to expression, expressed by the venom gland.

Its subcellular location is the secreted. Its function is as follows. Toxin with unknown function in healthy organisms. On glioma cells, interacts with chloride channels (probably ClC-3/CLCN3) and MMP2 at the surface of glioma cells. This complex is then internalized via caveolae, thus inhibiting the chloride channels necessary for cell shrinkage and tumor propagation. The sequence is that of Toxin Lqh 8/6 from Leiurus hebraeus (Hebrew deathstalker scorpion).